Here is a 212-residue protein sequence, read N- to C-terminus: Adenylate kinase (212 aa).

14–19 contributes to the ATP binding site; the sequence is GSGKGT. The interval 34–63 is NMP; the sequence is STGDLFRKKISEDSQFAAQIQNYLSSGSYV. AMP-binding positions include T35, R40, 61 to 63, 89 to 92, and Q96; these read SYV and GYPR. The tract at residues 126–163 is LID; that stretch reads QRLFCQKCQKSYNLLLAKPKNGLKCDLDNTDLITRNDD. R127 is a binding site for ATP. Positions 130 and 133 each coordinate Zn(2+). ATP is bound at residue 136–137; the sequence is SY. Residues C150 and D153 each coordinate Zn(2+). AMP is bound by residues R160 and R171. ATP is bound at residue Q199.

Belongs to the adenylate kinase family. As to quaternary structure, monomer.

It localises to the cytoplasm. The enzyme catalyses AMP + ATP = 2 ADP. Its pathway is purine metabolism; AMP biosynthesis via salvage pathway; AMP from ADP: step 1/1. Its function is as follows. Catalyzes the reversible transfer of the terminal phosphate group between ATP and AMP. Plays an important role in cellular energy homeostasis and in adenine nucleotide metabolism. The sequence is that of Adenylate kinase from Mesomycoplasma hyopneumoniae (strain 7448) (Mycoplasma hyopneumoniae).